A 394-amino-acid polypeptide reads, in one-letter code: NAD(P)H-quinone oxidoreductase subunit H (394 aa).

Belongs to the complex I 49 kDa subunit family. NDH-1 can be composed of about 15 different subunits; different subcomplexes with different compositions have been identified which probably have different functions.

The protein resides in the cellular thylakoid membrane. It catalyses the reaction a plastoquinone + NADH + (n+1) H(+)(in) = a plastoquinol + NAD(+) + n H(+)(out). The catalysed reaction is a plastoquinone + NADPH + (n+1) H(+)(in) = a plastoquinol + NADP(+) + n H(+)(out). Its function is as follows. NDH-1 shuttles electrons from an unknown electron donor, via FMN and iron-sulfur (Fe-S) centers, to quinones in the respiratory and/or the photosynthetic chain. The immediate electron acceptor for the enzyme in this species is believed to be plastoquinone. Couples the redox reaction to proton translocation, and thus conserves the redox energy in a proton gradient. Cyanobacterial NDH-1 also plays a role in inorganic carbon-concentration. The polypeptide is NAD(P)H-quinone oxidoreductase subunit H (Nostoc punctiforme (strain ATCC 29133 / PCC 73102)).